A 160-amino-acid polypeptide reads, in one-letter code: Large ribosomal subunit protein uL11 (160 aa).

The protein belongs to the universal ribosomal protein uL11 family. As to quaternary structure, part of the ribosomal stalk of the 50S ribosomal subunit. Interacts with L10 and the large rRNA to form the base of the stalk. L10 forms an elongated spine to which L12 dimers bind in a sequential fashion forming a multimeric L10(L12)X complex.

Functionally, forms part of the ribosomal stalk which helps the ribosome interact with GTP-bound translation factors. This chain is Large ribosomal subunit protein uL11, found in Nanoarchaeum equitans (strain Kin4-M).